Here is a 377-residue protein sequence, read N- to C-terminus: Adenosine 3'-phospho 5'-phosphosulfate transporter 2 (377 aa).

The next 10 membrane-spanning stretches (helical) occupy residues 50 to 70, 77 to 97, 115 to 135, 138 to 158, 164 to 184, 195 to 215, 228 to 248, 266 to 286, 293 to 313, and 317 to 337; these read LCCG…ELIF, PYGW…GYIE, ALLA…VGYL, PTQV…SVLI, GPMD…FTLA, FGVF…NVQE, VVIY…LLSG, GYAF…LTLV, LAAT…FVFF, and FTIQ…LNVY.

It belongs to the nucleotide-sugar transporter family. SLC35B subfamily.

The protein resides in the golgi apparatus membrane. In terms of biological role, mediates the transport of adenosine 3'-phospho 5'-phosphosulfate (PAPS), from cytosol into Golgi. PAPS is a universal sulfuryl donor for sulfation events that take place in the Golgi. Essential for viability. Involved in glycosaminoglycan synthesis and the subsequent signaling. May be involved in hh and dpp signaling by controlling the sulfation of heparan sulfate (HS). The polypeptide is Adenosine 3'-phospho 5'-phosphosulfate transporter 2 (Anopheles gambiae (African malaria mosquito)).